Reading from the N-terminus, the 478-residue chain is Endoplasmic reticulum oxidoreductin-1 (478 aa).

Residues 1–20 (MREPLLQLIVLSLIIIVVNT) form the signal peptide. Cystine bridges form between Cys-28–Cys-41, Cys-30–Cys-39, Cys-79–Cys-384, Cys-88–Cys-93, Cys-209–Cys-230, and Cys-387–Cys-390. Residues 117–143 (AAVKEEEDDDAEKCADAGNNIDPMDRT) form a disordered region. Arg-188, Thr-190, and Trp-201 together coordinate FAD. Positions 241, 244, 283, and 295 each coordinate FAD. Asn-377 is a glycosylation site (N-linked (GlcNAc...) asparagine). The disordered stretch occupies residues 459–478 (ESVMNTAADGPPRKSNKIDL).

This sequence belongs to the EROs family. May function both as a monomer and a homodimer. Requires FAD as cofactor.

The protein localises to the endoplasmic reticulum membrane. Its function is as follows. Oxidoreductase involved in disulfide bond formation in the endoplasmic reticulum. Efficiently reoxidizes pdi-1, the enzyme catalyzing protein disulfide formation, in order to allow pdi-1 to sustain additional rounds of disulfide formation. Following pdi reoxidation, passes its electrons to molecular oxygen via FAD, leading to the production of reactive oxygen species (ROS) in the cell. This Caenorhabditis elegans protein is Endoplasmic reticulum oxidoreductin-1 (ero-1).